The primary structure comprises 91 residues: MENRDIIKRPVITERSSEQMAQDKYTFDVDTRANKTQIKIAIEDIFNVKVDKVNVMNYKAKKKRVGRYNGYTNKRRKAIVTLKEGSIDFFN.

It belongs to the universal ribosomal protein uL23 family. Part of the 50S ribosomal subunit. Contacts protein L29, and trigger factor when it is bound to the ribosome.

One of the early assembly proteins it binds 23S rRNA. One of the proteins that surrounds the polypeptide exit tunnel on the outside of the ribosome. Forms the main docking site for trigger factor binding to the ribosome. This Macrococcus caseolyticus (strain JCSC5402) (Macrococcoides caseolyticum) protein is Large ribosomal subunit protein uL23.